A 542-amino-acid chain; its full sequence is Hydroxylamine reductase (542 aa).

Positions 3, 6, 15, and 21 each coordinate [4Fe-4S] cluster. 8 residues coordinate hybrid [4Fe-2O-2S] cluster: His243, Glu267, Cys311, Cys398, Cys426, Cys451, Glu485, and Lys487. Cys398 carries the cysteine persulfide modification.

The protein belongs to the HCP family. [4Fe-4S] cluster serves as cofactor. Hybrid [4Fe-2O-2S] cluster is required as a cofactor.

The protein localises to the cytoplasm. It catalyses the reaction A + NH4(+) + H2O = hydroxylamine + AH2 + H(+). In terms of biological role, catalyzes the reduction of hydroxylamine to form NH(3) and H(2)O. The protein is Hydroxylamine reductase of Syntrophobacter fumaroxidans (strain DSM 10017 / MPOB).